We begin with the raw amino-acid sequence, 868 residues long: Aconitate hydratase B (868 aa).

Substrate-binding positions include Arg-192, 235–237 (SSR), 404–406 (QDT), and Ser-488. Residues Cys-700, Cys-758, and Cys-761 each coordinate [4Fe-4S] cluster. 2 residues coordinate substrate: Arg-780 and Arg-785.

It belongs to the aconitase/IPM isomerase family. As to quaternary structure, monomer. The cofactor is [4Fe-4S] cluster.

It carries out the reaction citrate = D-threo-isocitrate. The enzyme catalyses (2S,3R)-3-hydroxybutane-1,2,3-tricarboxylate = 2-methyl-cis-aconitate + H2O. The protein operates within carbohydrate metabolism; tricarboxylic acid cycle; isocitrate from oxaloacetate: step 2/2. Its pathway is organic acid metabolism; propanoate degradation. Functionally, involved in the catabolism of short chain fatty acids (SCFA) via the tricarboxylic acid (TCA)(acetyl degradation route) and probably via the 2-methylcitrate cycle I (propionate degradation route). Catalyzes the reversible isomerization of citrate to isocitrate via cis-aconitate. Catalyzes the hydration of 2-methyl-cis-aconitate to yield (2R,3S)-2-methylisocitrate. The apo form of AcnB functions as a RNA-binding regulatory protein. This is Aconitate hydratase B (acnB) from Synechocystis sp. (strain ATCC 27184 / PCC 6803 / Kazusa).